Here is a 1164-residue protein sequence, read N- to C-terminus: FH1/FH2 domain-containing protein 1 (1164 aa).

The 406-residue stretch at 53–458 (AQIPAVHRLL…AAETEKQVAL (406 aa)) folds into the GBD/FH3 domain. Disordered stretches follow at residues 340-411 (DIEE…VGPP) and 470-500 (MPNEAGGHPDARQLWDSPETAPAARTPQSPA). A compositionally biased stretch (basic and acidic residues) spans 355–368 (KPSSEEGKRSRRSL). A Phosphoserine modification is found at Ser367. Residues 402-411 (GPASSPVGPP) are compositionally biased toward low complexity. Phosphoserine is present on Ser486. An FH1 domain is found at 487–615 (PETAPAARTP…LAAPLPHSVP (129 aa)). Phosphothreonine is present on Thr495. Phosphoserine occurs at positions 498, 523, and 573. The segment at 566–619 (GKDIPAPSPPLPLLSGVPPPPPLPPPPPIKGPFPPPPPLPLAAPLPHSVPDSSA) is disordered. Residues 571–608 (APSPPLPLLSGVPPPPPLPPPPPIKGPFPPPPPLPLAA) show a composition bias toward pro residues. The interval 612–807 (HSVPDSSALP…AEPLFDLKVG (196 aa)) is interaction with ROCK1. The 398-residue stretch at 616–1013 (DSSALPTKRK…YRERNKTRGR (398 aa)) folds into the FH2 domain. Phosphothreonine is present on Thr690. Positions 884-921 (LTRCAKVDFEQLTENLGQLERRSRAAEESLRSLAKHEL) form a coiled coil. Residues 1020–1143 (KFSGVAGEAP…NRKSLRRTLK (124 aa)) form a disordered region. The segment covering 1028–1041 (APSNPSVPVAVSSG) has biased composition (low complexity). Positions 1053–1133 (MKSLLTSRPE…AARERKRSRG (81 aa)) constitute a DAD domain. Residues 1073 to 1089 (MVQSSSPIMPTVGPSTA) are compositionally biased toward polar residues. The span at 1127–1142 (ERKRSRGNRKSLRRTL) shows a compositional bias: basic residues.

It belongs to the formin homology family. In terms of assembly, self-associates via the FH2 domain. Binds to F-actin via its N-terminus. Binds to the cytoplasmic domain of CD21 via its C-terminus. Interacts with ROCK1 in a Src-dependent manner. Phosphorylated by ROCK1. As to expression, ubiquitous. Highly expressed in spleen.

The protein resides in the cytoplasm. The protein localises to the cytoskeleton. It is found in the cell projection. Its subcellular location is the bleb. Required for the assembly of F-actin structures, such as stress fibers. Depends on the Rho-ROCK cascade for its activity. Contributes to the coordination of microtubules with actin fibers and plays a role in cell elongation. Acts synergistically with ROCK1 to promote SRC-dependent non-apoptotic plasma membrane blebbing. The sequence is that of FH1/FH2 domain-containing protein 1 (FHOD1) from Homo sapiens (Human).